The following is a 141-amino-acid chain: Nucleoside diphosphate kinase (141 aa).

Residues lysine 11, phenylalanine 59, arginine 87, threonine 93, arginine 104, and asparagine 114 each contribute to the ATP site. Histidine 117 (pros-phosphohistidine intermediate) is an active-site residue.

This sequence belongs to the NDK family. As to quaternary structure, homotetramer. Mg(2+) is required as a cofactor.

The protein resides in the cytoplasm. It carries out the reaction a 2'-deoxyribonucleoside 5'-diphosphate + ATP = a 2'-deoxyribonucleoside 5'-triphosphate + ADP. The catalysed reaction is a ribonucleoside 5'-diphosphate + ATP = a ribonucleoside 5'-triphosphate + ADP. Its function is as follows. Major role in the synthesis of nucleoside triphosphates other than ATP. The ATP gamma phosphate is transferred to the NDP beta phosphate via a ping-pong mechanism, using a phosphorylated active-site intermediate. The polypeptide is Nucleoside diphosphate kinase (Acidithiobacillus ferrooxidans (strain ATCC 53993 / BNL-5-31) (Leptospirillum ferrooxidans (ATCC 53993))).